The chain runs to 417 residues: MAEIKNYTLNFGPQHPAAHGVLRLVLELDGEVIQRADPHIGLLHRATEKLAENKTFIQSVPYMDRLDYVSMMVNEHGYVLAIERLLGIDVPERAQYIRVLFDEITRVLNHLMWIGAHALDVGAMAVFLYAFREREDLMDVYEAVSGARMHAAYYRPGGVYRDLPDAMPQFKASKIRNEKALAKMNEARSGSVLDFIDDFFTRFPKCIDEYETLLTDNRIWKQRLVGIGVVSPERALQMGLTGPMLRGSGIAWDLRKKQPYEVYDRMDFDVPVGVNGDCYDRYLVRVEEMRQSVRIAKQCIEWLRKNQGPVMTDNHKVAPPSRVGMKTNMEDLIHHFKLFTEGFHVPEGEAYAAVEHPKGEFGIYLVSDGANKPYRLKIRAPGFAHLASLDEMARGHMIADAVTIIGTQDIVFGEIDR.

This sequence belongs to the complex I 49 kDa subunit family. NDH-1 is composed of 14 different subunits. Subunits NuoB, C, D, E, F, and G constitute the peripheral sector of the complex.

The protein resides in the cell inner membrane. The enzyme catalyses a quinone + NADH + 5 H(+)(in) = a quinol + NAD(+) + 4 H(+)(out). Functionally, NDH-1 shuttles electrons from NADH, via FMN and iron-sulfur (Fe-S) centers, to quinones in the respiratory chain. The immediate electron acceptor for the enzyme in this species is believed to be ubiquinone. Couples the redox reaction to proton translocation (for every two electrons transferred, four hydrogen ions are translocated across the cytoplasmic membrane), and thus conserves the redox energy in a proton gradient. This chain is NADH-quinone oxidoreductase subunit D, found in Burkholderia vietnamiensis (strain G4 / LMG 22486) (Burkholderia cepacia (strain R1808)).